An 88-amino-acid polypeptide reads, in one-letter code: Putative septation protein SpoVG (88 aa).

Belongs to the SpoVG family.

Functionally, could be involved in septation. The protein is Putative septation protein SpoVG of Caldicellulosiruptor bescii (strain ATCC BAA-1888 / DSM 6725 / KCTC 15123 / Z-1320) (Anaerocellum thermophilum).